The chain runs to 431 residues: Large envelope protein (431 aa).

Residue Gly2 is the site of N-myristoyl glycine; by host attachment. The segment at 2–148 (GNNIKVTFNP…PPLRDTHPHL (147 aa)) is pre-S1. The interval 2–207 (GNNIKVTFNP…PSTTGDPALS (206 aa)) is pre-S. Residues 2–214 (GNNIKVTFNP…ALSPEMSPSS (213 aa)) are Virion surface; in external conformation-facing. Over 2 to 286 (GNNIKVTFNP…NGFRWMYLRR (285 aa)) the chain is Intravirion; in internal conformation. Residue Asn3 is glycosylated (N-linked (GlcNAc...) asparagine). Residues 115–147 (IPRGLVPPQTPTNRDQGRKPTPPTPPLRDTHPH) are disordered. The segment at 149 to 207 (TMKNQTFHLQGFVDGLRDLTTTERQHNAYRDPFTTLSPAVPTVSTILSPPSTTGDPALS) is pre-S2. A helical membrane pass occupies residues 215–235 (LLGLLAGLQVVYFLWTKILTI). Residues 236-286 (AQNLDWWCTSLSFPGGIPECTGQNSQFQTCKHLPTSCPPTCNGFRWMYLRR) lie on the Intravirion; in external conformation side of the membrane. A helical membrane pass occupies residues 287-307 (FIIYLLVLLLCLIFLLVLLDW). Residues 308-379 (KGLIPVCPLQ…WALARLSWLN (72 aa)) lie on the Virion surface side of the membrane. A glycan (N-linked (GlcNAc...) asparagine; by host) is linked at Asn351. A helical transmembrane segment spans residues 380-400 (LLVPLLQWLGGISLIAWFLLI). Residues 401 to 406 (WMIWFW) lie on the Intravirion side of the membrane. The chain crosses the membrane as a helical span at residues 407–429 (GPALLSILPPFIPIFVLFFLIWV). Topologically, residues 430-431 (YI) are virion surface.

It belongs to the orthohepadnavirus major surface antigen family. In its internal form (Li-HBsAg), interacts with the capsid protein and with the isoform S. Interacts with host chaperone CANX. In terms of assembly, associates with host chaperone CANX through its pre-S2 N glycan; this association may be essential for isoform M proper secretion. As to quaternary structure, interacts with isoform L. Interacts with the antigens of satellite virus HDV (HDVAgs); this interaction is required for encapsidation of HDV genomic RNA. In terms of processing, isoform M is N-terminally acetylated by host at a ratio of 90%, and N-glycosylated by host at the pre-S2 region. Post-translationally, myristoylated.

It localises to the virion membrane. Its function is as follows. The large envelope protein exists in two topological conformations, one which is termed 'external' or Le-HBsAg and the other 'internal' or Li-HBsAg. In its external conformation the protein attaches the virus to cell receptors and thereby initiating infection. This interaction determines the species specificity and liver tropism. This attachment induces virion internalization predominantly through caveolin-mediated endocytosis. The large envelope protein also assures fusion between virion membrane and endosomal membrane. In its internal conformation the protein plays a role in virion morphogenesis and mediates the contact with the nucleocapsid like a matrix protein. The middle envelope protein plays an important role in the budding of the virion. It is involved in the induction of budding in a nucleocapsid independent way. In this process the majority of envelope proteins bud to form subviral lipoprotein particles of 22 nm of diameter that do not contain a nucleocapsid. In Marmota monax (Woodchuck), this protein is Large envelope protein.